A 351-amino-acid polypeptide reads, in one-letter code: Dihydroorotate dehydrogenase (quinone) (351 aa).

Residues 61-65 (AGLDK) and threonine 85 contribute to the FMN site. Residue lysine 65 participates in substrate binding. 110 to 114 (NRMGF) is a binding site for substrate. Positions 139 and 172 each coordinate FMN. Asparagine 172 provides a ligand contact to substrate. Residue serine 175 is the Nucleophile of the active site. Residue asparagine 177 coordinates substrate. Lysine 217 and threonine 245 together coordinate FMN. Residue 246–247 (NT) coordinates substrate. FMN is bound by residues glycine 268, glycine 297, and 318–319 (YT).

It belongs to the dihydroorotate dehydrogenase family. Type 2 subfamily. Monomer. The cofactor is FMN.

The protein localises to the cell membrane. The catalysed reaction is (S)-dihydroorotate + a quinone = orotate + a quinol. The protein operates within pyrimidine metabolism; UMP biosynthesis via de novo pathway; orotate from (S)-dihydroorotate (quinone route): step 1/1. Catalyzes the conversion of dihydroorotate to orotate with quinone as electron acceptor. The chain is Dihydroorotate dehydrogenase (quinone) from Xylella fastidiosa (strain M12).